The following is a 379-amino-acid chain: Heme chaperone HemW (379 aa).

The Radical SAM core domain occupies 1 to 233; sequence MKSAYIHIPF…MSKMEAHGIH (233 aa). Residue tyrosine 5 coordinates S-adenosyl-L-methionine. Positions 11, 15, and 18 each coordinate [4Fe-4S] cluster. S-adenosyl-L-methionine contacts are provided by residues glycine 60, 61 to 62, glutamate 94, glutamine 121, arginine 133, and aspartate 158; that span reads GT.

It belongs to the anaerobic coproporphyrinogen-III oxidase family. HemW subfamily. Requires [4Fe-4S] cluster as cofactor.

It is found in the cytoplasm. Functionally, probably acts as a heme chaperone, transferring heme to an unknown acceptor. Binds one molecule of heme per monomer, possibly covalently. Binds 1 [4Fe-4S] cluster. The cluster is coordinated with 3 cysteines and an exchangeable S-adenosyl-L-methionine. The chain is Heme chaperone HemW from Bacillus subtilis (strain 168).